A 232-amino-acid polypeptide reads, in one-letter code: Phosphatidylserine decarboxylase proenzyme (232 aa).

The Schiff-base intermediate with substrate; via pyruvic acid role is filled by S190. The residue at position 190 (S190) is a Pyruvic acid (Ser); by autocatalysis.

This sequence belongs to the phosphatidylserine decarboxylase family. PSD-A subfamily. Heterodimer of a large membrane-associated beta subunit and a small pyruvoyl-containing alpha subunit. Requires pyruvate as cofactor. Post-translationally, is synthesized initially as an inactive proenzyme. Formation of the active enzyme involves a self-maturation process in which the active site pyruvoyl group is generated from an internal serine residue via an autocatalytic post-translational modification. Two non-identical subunits are generated from the proenzyme in this reaction, and the pyruvate is formed at the N-terminus of the alpha chain, which is derived from the carboxyl end of the proenzyme. The post-translation cleavage follows an unusual pathway, termed non-hydrolytic serinolysis, in which the side chain hydroxyl group of the serine supplies its oxygen atom to form the C-terminus of the beta chain, while the remainder of the serine residue undergoes an oxidative deamination to produce ammonia and the pyruvoyl prosthetic group on the alpha chain.

It localises to the cell membrane. The catalysed reaction is a 1,2-diacyl-sn-glycero-3-phospho-L-serine + H(+) = a 1,2-diacyl-sn-glycero-3-phosphoethanolamine + CO2. It functions in the pathway phospholipid metabolism; phosphatidylethanolamine biosynthesis; phosphatidylethanolamine from CDP-diacylglycerol: step 2/2. Its function is as follows. Catalyzes the formation of phosphatidylethanolamine (PtdEtn) from phosphatidylserine (PtdSer). The protein is Phosphatidylserine decarboxylase proenzyme of Cereibacter sphaeroides (strain KD131 / KCTC 12085) (Rhodobacter sphaeroides).